Consider the following 821-residue polypeptide: MDPECAQLLPALCAVLVDPRQPVADDTCLEKLLDWFKTVTEGESSVVLLQEHPCLVELLSHVLKVQDLSSGVLSFSLRLAGTFAAQENCFQYLQQGELLPGLFGEPGPLGRATWAVPTVRSGWIQGLRSLAQHPSALRFLADHGAVDTIFSLQGDSSLFVASAASQLLVHVLALSMRGGAEGQPCLPGGDWPACAQKIMDHVEESLCSAATPKVTQALNVLTTTFGRCQSPWTEALWVRLSPRVACLLERDPIPAAHSFVDLLLCVARSPVFSSSDGSLWETVARALSCLGPTHMGPLALGILKLEHCPQALRTQAFQVLLQPLACVLKATVQAPGPPGLLDGTADDATTVDTLLASKSSCAGLLCRTLAHLEELQPLPQRPSPWPQASLLGATVTVLRLCDGSAAPASSVGGHLCGTLAGCVRVQRAALDFLGTLSQGTGPQELVTQALAVLLECLESPGSSPTVLKKAFQATLRWLLSSPKTPGCSDLGPLIPQFLRELFPVLQKRLCHPCWEVRDSALEFLTQLSRHWGGQADFRCALLASEVPQLALQLLQDPESYVRASAVTAMGQLSSQGLHAPTSPEHAEARQSLFLELLHILSVDSEGFPRRAVMQVFTEWLRDGHADAAQDTEQFVATVLQAASRDLDWEVRAQGLELALVFLGQTLGPPRTHCPYAVALPEVAPAQPLTEALRALCHVGLFDFAFCALFDCDRPVAQKSCDLLLFLRDKIASYSSLREARGSPNTASAEATLPRWRAGEQAQPPGDQEPEAVLAMLRSLDLEGLRSTLAESSDHVEKSPQSLLQDMLATGGFLQGDEADCY.

The required for interaction with NDFIP1 stretch occupies residues 100-200 (PGLFGEPGPL…WPACAQKIMD (101 aa)). 2 HEAT repeats span residues 495-531 (PQFL…SRHW) and 544-576 (SEVP…SSQG). Positions 741–767 (GSPNTASAEATLPRWRAGEQAQPPGDQ) are disordered. A Phosphoserine modification is found at S742. Positions 819–821 (DCY) match the BRAT1-like motif motif. C820 serves as a coordination point for Zn(2+).

Belongs to the BRAT1 family. As to quaternary structure, part of the multiprotein complex composed of BRAT1, WDR73, as well as integrator complex subunits INTS9 and INTS11. Interacts with BRCA1 and ATM. Interacts with MTOR and RPTOR. Interacts with NDFIP1. Interacts with SMC1A and PRKDC. Post-translationally, ubiquitinated by NEDD4, NEDD4L and ITCH; mono- and polyubiquitinated forms are detected. Ubiquitously expressed.

Its subcellular location is the nucleus. The protein localises to the cytoplasm. Component of a multiprotein complex required for the assembly of the RNA endonuclease module of the integrator complex. Associates with INTS9 and INTS11 in the cytoplasm and blocks the active site of INTS11 to inhibit the endonuclease activity of INTS11 before formation of the full integrator complex. Following dissociation of WDR73 of the complex, BRAT1 facilitates the nuclear import of the INTS9-INTS11 heterodimer. In the nucleus, INTS4 is integrated to the INTS9-INTS11 heterodimer and BRAT1 is released from the mature RNA endonuclease module by inositol hexakisphosphate (InsP6). BRAT1 is also involved in DNA damage response; activates kinases ATM, SMC1A and PRKDC by modulating their phosphorylation status following ionizing radiation (IR) stress. Plays a role in regulating mitochondrial function and cell proliferation. Required for protein stability of MTOR and MTOR-related proteins, and cell cycle progress by growth factors. The sequence is that of Integrator complex assembly factor BRAT1 from Homo sapiens (Human).